The primary structure comprises 217 residues: CLA biosynthesis enone reductase (217 aa).

Residues Arg20, Ser22, and Arg24 each coordinate FMN. A 10-oxooctadecanoate-binding site is contributed by Cys51. The FMN site is built by Asn78 and Gln81. Arg118 contributes to the 10-oxooctadecanoate binding site. Positions 165, 168, 169, and 206 each coordinate FMN.

It belongs to the nitroreductase family. As to quaternary structure, homodimer. The cofactor is FMN.

The enzyme catalyses 10-oxo-(11E)-octadecenoate + NADH + H(+) = 10-oxooctadecanoate + NAD(+). It participates in lipid metabolism; fatty acid metabolism. Functionally, is involved in a saturation metabolic pathway of polyunsaturated fatty acids, that detoxifies unsaturated fatty acids and generates hydroxy fatty acids, oxo fatty acids, conjugated fatty acids such as conjugated linoleic acids (CLAs), and partially saturated trans-fatty acids as intermediates. CLA-ER catalyzes the saturation of the carbon-carbon double bond in 10-oxo-(11E)-octadecenoate to produce 10-oxooctadecanoate, during linoleate metabolism. As part of the gut microbiome, this enzyme modifies host fatty acid composition and is expected to improve human health by altering lipid metabolism related to the onset of metabolic syndrome. This Lactiplantibacillus plantarum (Lactobacillus plantarum) protein is CLA biosynthesis enone reductase.